The chain runs to 399 residues: Rho GTPase-activating protein gacC (399 aa).

Basic and acidic residues predominate over residues 1-13 (MESKDQNVYRKGS). Residues 1–80 (MESKDQNVYR…SSSTSTTPVK (80 aa)) are disordered. Residues 14 to 31 (DNFSKGSNTFFGNLKSIS) show a composition bias toward polar residues. The segment covering 61-79 (SVDSSSSNPSSSSTSTTPV) has biased composition (low complexity). The Rho-GAP domain occupies 186–375 (VELEESFKTA…NLISFFQQIF (190 aa)).

It localises to the cytoplasm. In terms of biological role, rho GTPase-activating protein involved in the signal transduction pathway. The polypeptide is Rho GTPase-activating protein gacC (gacC) (Dictyostelium discoideum (Social amoeba)).